Reading from the N-terminus, the 588-residue chain is Aspartate--tRNA ligase (588 aa).

E174 provides a ligand contact to L-aspartate. The tract at residues 198–201 is aspartate; the sequence is QLFK. R220 lines the L-aspartate pocket. Residues 220–222 and Q229 each bind ATP; that span reads RDE. H448 lines the L-aspartate pocket. E482 contributes to the ATP binding site. R489 serves as a coordination point for L-aspartate. 534–537 serves as a coordination point for ATP; that stretch reads GIDR.

It belongs to the class-II aminoacyl-tRNA synthetase family. Type 1 subfamily. In terms of assembly, homodimer.

It localises to the cytoplasm. The enzyme catalyses tRNA(Asp) + L-aspartate + ATP = L-aspartyl-tRNA(Asp) + AMP + diphosphate. Catalyzes the attachment of L-aspartate to tRNA(Asp) in a two-step reaction: L-aspartate is first activated by ATP to form Asp-AMP and then transferred to the acceptor end of tRNA(Asp). This Xanthomonas oryzae pv. oryzae (strain PXO99A) protein is Aspartate--tRNA ligase.